Consider the following 1872-residue polypeptide: Histone acetyltransferase KAT6B (1872 aa).

In terms of domain architecture, SAMD1-like winged helix (WH) spans 1 to 77; it reads MVKLANPLYT…LASYKDPDNP (77 aa). Disordered regions lie at residues 70-103 and 168-207; these read SYKD…CNDL and KEGP…HEKD. Residues 104–177 form the H15 domain; the sequence is RNVDWNKLLK…KEGPQYRVNS (74 aa). The segment covering 189–202 has biased composition (low complexity); sequence PSAFPSSLPPVSLL. 2 consecutive PHD-type zinc fingers follow at residues 214–273 and 270–321; these read IPIC…CKTC and CKTC…CRPK. Residue S356 is modified to Phosphoserine. The disordered stretch occupies residues 361–417; sequence EGSMSAFTGRGSPGRGQKTKVSTTPSSGHAASGKHSSSRLAVTDPTRPGATTKTTTS. The segment at 362-535 is negatively regulates HAT activity; the sequence is GSMSAFTGRG…ECESGVEDCG (174 aa). Residues 386–395 are compositionally biased toward low complexity; that stretch reads SSGHAASGKH. Residue K491 forms a Glycyl lysine isopeptide (Lys-Gly) (interchain with G-Cter in SUMO2) linkage. An MYST-type HAT domain is found at 533–807; sequence DCGRYPSVIE…LDPESLRWTP (275 aa). The segment at 536–826 is catalytic; sequence RYPSVIEFGK…EEEREAEKEA (291 aa). The C2HC MYST-type zinc finger occupies 566-591; it reads LYLCEFCLKYMKSKNILLRHSKKCGW. Residues 570 to 826 form an interaction with BRPF1 region; it reads EFCLKYMKSK…EEEREAEKEA (257 aa). The residue at position 633 (K633) is an N6-acetyllysine; by autocatalysis. Acetyl-CoA-binding positions include 674-678 and 683-689; these read SCIMI and QRQGFGR. The active-site Proton donor/acceptor is the E709. Residue S713 coordinates acetyl-CoA. The span at 846 to 860 shows a compositional bias: low complexity; sequence SRVSSRQSSAKVQSK. Disordered regions lie at residues 846-1018, 1031-1252, 1283-1358, and 1388-1418; these read SRVS…NHFF, DAEH…FKDA, MSCN…DDTF, and DECQ…SPSV. K856, K860, and K862 each carry N6-acetyllysine. S866 bears the Phosphoserine mark. Acidic residues predominate over residues 887–909; sequence SEEEEEEEEEDDEEEEEEEEEES. Residues 910-924 show a composition bias toward polar residues; sequence IQTSPPRLTKPQSVS. The segment covering 925–944 has biased composition (basic residues); sequence IKRKRPFVVKKKRGRKRRRI. Over residues 946–959 the composition is skewed to low complexity; sequence SSVTTETISETTEV. Basic residues predominate over residues 991-1004; it reads PVLRKAFPHQPGKK. Composition is skewed to basic and acidic residues over residues 1031 to 1047 and 1094 to 1114; these read DAEH…EPLK and EEQK…REVT. The segment covering 1155–1176 has biased composition (acidic residues); sequence EEGEEEGEEEGEREEQEEEEEV. The span at 1177-1207 shows a compositional bias: basic and acidic residues; it reads TTEKDLDGAKSKENPEPEISMEKEDPVHLGD. A compositionally biased stretch (acidic residues) spans 1208–1217; that stretch reads HEEDEDEEEE. Composition is skewed to basic and acidic residues over residues 1238–1252 and 1310–1320; these read NMER…FKDA and QTQKQDQKNSD. Over residues 1339–1349 the composition is skewed to polar residues; sequence ETAQAVQSLTQ. An interaction with RUNX1 and RUNX2 region spans residues 1359–1872; that stretch reads PDCAETQEAC…QSLNGSYMRR (514 aa). A compositionally biased stretch (low complexity) spans 1393-1410; the sequence is SDHSSPVSSVHSHPGQSV.

This sequence belongs to the MYST (SAS/MOZ) family. Component of the MOZ/MORF complex composed at least of ING5, KAT6A, KAT6B, MEAF6 and one of BRPF1, BRD1/BRPF2 and BRPF3. Interacts with RUNX1 and RUNX2. In terms of processing, autoacetylation at Lys-633 is required for proper function. As to expression, ubiquitously expressed.

Its subcellular location is the nucleus. It carries out the reaction L-lysyl-[protein] + acetyl-CoA = N(6)-acetyl-L-lysyl-[protein] + CoA + H(+). Histone acetyltransferase which may be involved in both positive and negative regulation of transcription. Required for RUNX2-dependent transcriptional activation. Component of the MOZ/MORF complex which has a histone H3 acetyltransferase activity. Involved in cerebral cortex development. The protein is Histone acetyltransferase KAT6B (Kat6b) of Mus musculus (Mouse).